The following is a 318-amino-acid chain: Glycerol 2-dehydrogenase (NADP(+)) (318 aa).

The active-site Proton donor is Y52. A substrate-binding site is contributed by H115. An NADP(+)-binding site is contributed by S217–N277.

The protein belongs to the aldo/keto reductase family.

The catalysed reaction is glycerol + NADP(+) = dihydroxyacetone + NADPH + H(+). Functionally, glycerol oxidoreductase probably involved in glycerol synthesis. The sequence is that of Glycerol 2-dehydrogenase (NADP(+)) (gld2) from Hypocrea jecorina (Trichoderma reesei).